A 129-amino-acid polypeptide reads, in one-letter code: Ig lambda-1 chain V region S43 (129 aa).

The first 19 residues, 1–19 (MAWISLILSLLALSSGAIS), serve as a signal peptide directing secretion. Residue Gln20 is modified to Pyrrolidone carboxylic acid. The Ig-like domain occupies 20–125 (QAVVTQESAL…HWVFGGGTKL (106 aa)).

The sequence is that of Ig lambda-1 chain V region S43 from Mus musculus (Mouse).